The primary structure comprises 523 residues: Galactarate dehydratase (L-threo-forming) (523 aa).

This sequence belongs to the UxaA family. In terms of assembly, homodimer. Requires Fe(2+) as cofactor.

The catalysed reaction is galactarate = 5-dehydro-4-deoxy-D-glucarate + H2O. The protein operates within carbohydrate acid metabolism; galactarate degradation; D-glycerate from galactarate: step 1/3. Catalyzes the dehydration of galactarate to form 5-dehydro-4-deoxy-D-glucarate (5-KDG). This Escherichia coli (strain K12) protein is Galactarate dehydratase (L-threo-forming).